We begin with the raw amino-acid sequence, 368 residues long: Alanine racemase 3 (368 aa).

The Proton acceptor; specific for D-alanine role is filled by K42. N6-(pyridoxal phosphate)lysine is present on K42. R141 serves as a coordination point for substrate. The Proton acceptor; specific for L-alanine role is filled by Y262. M310 contacts substrate.

This sequence belongs to the alanine racemase family. Requires pyridoxal 5'-phosphate as cofactor.

It carries out the reaction L-alanine = D-alanine. The protein operates within amino-acid biosynthesis; D-alanine biosynthesis; D-alanine from L-alanine: step 1/1. Catalyzes the interconversion of L-alanine and D-alanine. May also act on other amino acids. This chain is Alanine racemase 3 (alr3), found in Salmonella typhi.